Consider the following 197-residue polypeptide: Ion-translocating oxidoreductase complex subunit B (197 aa).

A hydrophobic region spans residues 1 to 26 (MSTILIAIIALAALAAVFGAILGFAS). Positions 32–90 (EADPIVDQIDSILPQTQCGQCGYPGCRPYAEAIANGDQINKCPPGGQATIEKLADLMGV) constitute a 4Fe-4S domain. [4Fe-4S] cluster-binding residues include Cys49, Cys52, Cys57, Cys73, Cys114, Cys117, Cys120, Cys124, Cys144, Cys147, Cys150, and Cys154. 4Fe-4S ferredoxin-type domains are found at residues 105–134 (TVAF…GGTK) and 135–164 (ALHT…MIPV).

It belongs to the 4Fe4S bacterial-type ferredoxin family. RnfB subfamily. As to quaternary structure, the complex is composed of six subunits: RnfA, RnfB, RnfC, RnfD, RnfE and RnfG. Requires [4Fe-4S] cluster as cofactor.

The protein resides in the cell inner membrane. In terms of biological role, part of a membrane-bound complex that couples electron transfer with translocation of ions across the membrane. The polypeptide is Ion-translocating oxidoreductase complex subunit B (Vibrio campbellii (strain ATCC BAA-1116)).